Consider the following 101-residue polypeptide: NAD(P)H-quinone oxidoreductase subunit 4L (101 aa).

The next 3 helical transmembrane spans lie at L3 to T23, V30 to N50, and V64 to I84.

The protein belongs to the complex I subunit 4L family. In terms of assembly, NDH-1 can be composed of about 15 different subunits; different subcomplexes with different compositions have been identified which probably have different functions.

Its subcellular location is the cellular thylakoid membrane. It carries out the reaction a plastoquinone + NADH + (n+1) H(+)(in) = a plastoquinol + NAD(+) + n H(+)(out). It catalyses the reaction a plastoquinone + NADPH + (n+1) H(+)(in) = a plastoquinol + NADP(+) + n H(+)(out). Its function is as follows. NDH-1 shuttles electrons from an unknown electron donor, via FMN and iron-sulfur (Fe-S) centers, to quinones in the respiratory and/or the photosynthetic chain. The immediate electron acceptor for the enzyme in this species is believed to be plastoquinone. Couples the redox reaction to proton translocation, and thus conserves the redox energy in a proton gradient. Cyanobacterial NDH-1 also plays a role in inorganic carbon-concentration. The chain is NAD(P)H-quinone oxidoreductase subunit 4L from Nostoc sp. (strain PCC 7120 / SAG 25.82 / UTEX 2576).